The following is a 105-amino-acid chain: Early nodulin-93 (105 aa).

A helical membrane pass occupies residues 66 to 83; the sequence is TAQALIISTATAAAYFIV.

Its subcellular location is the membrane. This chain is Early nodulin-93, found in Glycine max (Soybean).